Consider the following 465-residue polypeptide: Glutamate--tRNA ligase 1 (465 aa).

The short motif at proline 8 to asparagine 18 is the 'HIGH' region element. The short motif at proline 249–arginine 253 is the 'KMSKS' region element. Position 252 (lysine 252) interacts with ATP.

The protein belongs to the class-I aminoacyl-tRNA synthetase family. Glutamate--tRNA ligase type 1 subfamily. In terms of assembly, monomer.

Its subcellular location is the cytoplasm. It carries out the reaction tRNA(Glu) + L-glutamate + ATP = L-glutamyl-tRNA(Glu) + AMP + diphosphate. Its function is as follows. Catalyzes the attachment of glutamate to tRNA(Glu) in a two-step reaction: glutamate is first activated by ATP to form Glu-AMP and then transferred to the acceptor end of tRNA(Glu). This chain is Glutamate--tRNA ligase 1, found in Coxiella burnetii (strain CbuG_Q212) (Coxiella burnetii (strain Q212)).